Reading from the N-terminus, the 257-residue chain is Type III pantothenate kinase (257 aa).

Asp-6–Lys-13 serves as a coordination point for ATP. Position 109–112 (Gly-109–Arg-112) interacts with substrate. Asp-111 acts as the Proton acceptor in catalysis. Position 132 (Asp-132) interacts with K(+). An ATP-binding site is contributed by Thr-135. Thr-187 is a binding site for substrate.

It belongs to the type III pantothenate kinase family. As to quaternary structure, homodimer. It depends on NH4(+) as a cofactor. K(+) serves as cofactor.

It is found in the cytoplasm. The catalysed reaction is (R)-pantothenate + ATP = (R)-4'-phosphopantothenate + ADP + H(+). The protein operates within cofactor biosynthesis; coenzyme A biosynthesis; CoA from (R)-pantothenate: step 1/5. Functionally, catalyzes the phosphorylation of pantothenate (Pan), the first step in CoA biosynthesis. The protein is Type III pantothenate kinase of Anaplasma marginale (strain Florida).